The following is a 101-amino-acid chain: Small ribosomal subunit protein uS14 (101 aa).

It belongs to the universal ribosomal protein uS14 family. In terms of assembly, part of the 30S ribosomal subunit. Contacts proteins S3 and S10.

In terms of biological role, binds 16S rRNA, required for the assembly of 30S particles and may also be responsible for determining the conformation of the 16S rRNA at the A site. This Saccharophagus degradans (strain 2-40 / ATCC 43961 / DSM 17024) protein is Small ribosomal subunit protein uS14.